The sequence spans 155 residues: MANVESFDLDHTKVRAPYVRLAGVKTTPRGDSISKYDLRLLQPNQGAIDPAAIHTLEHLLAGYLRDHLQDVVDVSPMGCRTGMYMAVIGTPDEEGVLKAFEAALQDTAAHDRPIPGVSELECGNFRDHDLHAARQHAREALAQGLKVQQTVLLQR.

Residues histidine 54, histidine 58, and cysteine 122 each contribute to the Fe cation site.

It belongs to the LuxS family. In terms of assembly, homodimer. Fe cation is required as a cofactor.

It carries out the reaction S-(5-deoxy-D-ribos-5-yl)-L-homocysteine = (S)-4,5-dihydroxypentane-2,3-dione + L-homocysteine. Its function is as follows. Involved in the synthesis of autoinducer 2 (AI-2) which is secreted by bacteria and is used to communicate both the cell density and the metabolic potential of the environment. The regulation of gene expression in response to changes in cell density is called quorum sensing. Catalyzes the transformation of S-ribosylhomocysteine (RHC) to homocysteine (HC) and 4,5-dihydroxy-2,3-pentadione (DPD). This Deinococcus deserti (strain DSM 17065 / CIP 109153 / LMG 22923 / VCD115) protein is S-ribosylhomocysteine lyase.